We begin with the raw amino-acid sequence, 215 residues long: NAD(P)H-quinone oxidoreductase subunit I (215 aa).

2 consecutive 4Fe-4S ferredoxin-type domains span residues 55–84 and 95–124; these read GRIH…VDWV and RNYS…MTEE. Residues C64, C67, C70, C74, C104, C107, C110, and C114 each coordinate [4Fe-4S] cluster. The segment at 166–215 is disordered; it reads AGEMDPHGVPNDRPRAGQLPSQVLETLAPPAKVGAKNEGQSTGTTQEGEA. Residues 169–180 are compositionally biased toward basic and acidic residues; sequence MDPHGVPNDRPR. Polar residues predominate over residues 203–215; it reads EGQSTGTTQEGEA.

The protein belongs to the complex I 23 kDa subunit family. In terms of assembly, NDH-1 is composed of at least 11 different subunits. [4Fe-4S] cluster is required as a cofactor.

Its subcellular location is the cellular thylakoid membrane. It carries out the reaction a plastoquinone + NADH + (n+1) H(+)(in) = a plastoquinol + NAD(+) + n H(+)(out). The enzyme catalyses a plastoquinone + NADPH + (n+1) H(+)(in) = a plastoquinol + NADP(+) + n H(+)(out). Functionally, NDH-1 shuttles electrons from an unknown electron donor, via FMN and iron-sulfur (Fe-S) centers, to quinones in the respiratory and/or the photosynthetic chain. The immediate electron acceptor for the enzyme in this species is believed to be plastoquinone. Couples the redox reaction to proton translocation, and thus conserves the redox energy in a proton gradient. The sequence is that of NAD(P)H-quinone oxidoreductase subunit I from Parasynechococcus marenigrum (strain WH8102).